The chain runs to 956 residues: Lon protease homolog, mitochondrial 1 (956 aa).

2 disordered regions span residues 37 to 57 (NNNNNNNNNNNNNNNNNNNNN) and 83 to 123 (KKKG…GNEK). Positions 91–123 (NNDDNDNEKNEKNEKKVKNEKKEKNEKNDGNEK) are enriched in basic and acidic residues. The region spanning 159 to 357 (VVIYPSNSVN…MLYHMILNEQ (199 aa)) is the Lon N-terminal domain. 511–518 (GPPGTGKT) contributes to the ATP binding site. The region spanning 747-945 (VTPIGVVNGL…KDVFEVAFPN (199 aa)) is the Lon proteolytic domain. Over residues 777–795 (KPLSSLPPSQQQQNQLEPS) the composition is skewed to low complexity. The tract at residues 777–800 (KPLSSLPPSQQQQNQLEPSIKTTG) is disordered. Catalysis depends on residues serine 851 and lysine 894.

It belongs to the peptidase S16 family. Homohexamer or homoheptamer. Organized in a ring with a central cavity.

Its subcellular location is the mitochondrion matrix. The catalysed reaction is Hydrolysis of proteins in presence of ATP.. Functionally, ATP-dependent serine protease that mediates the selective degradation of misfolded, unassembled or oxidatively damaged polypeptides as well as certain short-lived regulatory proteins in the mitochondrial matrix. May also have a chaperone function in the assembly of inner membrane protein complexes. Participates in the regulation of mitochondrial gene expression and in the maintenance of the integrity of the mitochondrial genome. Binds to mitochondrial DNA in a site-specific manner. This Dictyostelium discoideum (Social amoeba) protein is Lon protease homolog, mitochondrial 1.